Consider the following 538-residue polypeptide: SWM histone demethylase complex subunit phf2 (538 aa).

Disordered stretches follow at residues 28 to 47, 98 to 150, and 198 to 222; these read RFPNDLHPTMFEGEESNQNG, EIES…SSPL, and TKSGRKVHRPNHFDPLVKLPTRRRG. Residues 98–111 are compositionally biased toward basic and acidic residues; that stretch reads EIESSKNQETDAKS. The segment at 232–288 adopts a PHD-type zinc-finger fold; that stretch reads AMKCSVCQRLQSPPKNRIVFCDGCNTPFHQLCHEPYISDELLDSPNGEWFCDDCIRR. Over residues 367-392 the composition is skewed to polar residues; the sequence is GDQYLSLNNGTESQSKTTKHSTSLPS. The segment at 367–396 is disordered; that stretch reads GDQYLSLNNGTESQSKTTKHSTSLPSTEPV.

As to quaternary structure, component of the SWM histone demethylase complex composed of at least lsd1, lsd2, phf1 and phf2.

Its subcellular location is the nucleus. Its function is as follows. Component of the SWM histone demethylase complex that specifically demethylates H3K9me2, a specific tag for epigenetic transcriptional activation, thereby acting as a corepressor. Has a role in regulating heterochromatin propagation and euchromatic transcription. The polypeptide is SWM histone demethylase complex subunit phf2 (phf2) (Schizosaccharomyces pombe (strain 972 / ATCC 24843) (Fission yeast)).